The chain runs to 112 residues: Large ribosomal subunit protein bL17 (112 aa).

Belongs to the bacterial ribosomal protein bL17 family. As to quaternary structure, part of the 50S ribosomal subunit. Contacts protein L32.

This Desulforamulus reducens (strain ATCC BAA-1160 / DSM 100696 / MI-1) (Desulfotomaculum reducens) protein is Large ribosomal subunit protein bL17.